Consider the following 475-residue polypeptide: Ribulose bisphosphate carboxylase large chain (475 aa).

The propeptide occupies 1 to 2; it reads MS. An N-acetylproline modification is found at Pro-3. The residue at position 14 (Lys-14) is an N6,N6,N6-trimethyllysine. Asn-123 and Thr-173 together coordinate substrate. The Proton acceptor role is filled by Lys-175. Lys-177 is a binding site for substrate. Residues Lys-201, Asp-203, and Glu-204 each coordinate Mg(2+). Residue Lys-201 is modified to N6-carboxylysine. The Proton acceptor role is filled by His-294. Substrate contacts are provided by Arg-295, His-327, and Ser-379.

The protein belongs to the RuBisCO large chain family. Type I subfamily. In terms of assembly, heterohexadecamer of 8 large chains and 8 small chains; disulfide-linked. The disulfide link is formed within the large subunit homodimers. Requires Mg(2+) as cofactor. In terms of processing, the disulfide bond which can form in the large chain dimeric partners within the hexadecamer appears to be associated with oxidative stress and protein turnover.

The protein resides in the plastid. It is found in the chloroplast. It catalyses the reaction 2 (2R)-3-phosphoglycerate + 2 H(+) = D-ribulose 1,5-bisphosphate + CO2 + H2O. It carries out the reaction D-ribulose 1,5-bisphosphate + O2 = 2-phosphoglycolate + (2R)-3-phosphoglycerate + 2 H(+). Its function is as follows. RuBisCO catalyzes two reactions: the carboxylation of D-ribulose 1,5-bisphosphate, the primary event in carbon dioxide fixation, as well as the oxidative fragmentation of the pentose substrate in the photorespiration process. Both reactions occur simultaneously and in competition at the same active site. The chain is Ribulose bisphosphate carboxylase large chain from Castanea sativa (Sweet chestnut).